The chain runs to 290 residues: ATP synthase gamma chain (290 aa).

It belongs to the ATPase gamma chain family. As to quaternary structure, F-type ATPases have 2 components, CF(1) - the catalytic core - and CF(0) - the membrane proton channel. CF(1) has five subunits: alpha(3), beta(3), gamma(1), delta(1), epsilon(1). CF(0) has three main subunits: a, b and c.

The protein localises to the cell inner membrane. Its function is as follows. Produces ATP from ADP in the presence of a proton gradient across the membrane. The gamma chain is believed to be important in regulating ATPase activity and the flow of protons through the CF(0) complex. This is ATP synthase gamma chain from Dictyoglomus turgidum (strain DSM 6724 / Z-1310).